A 79-amino-acid chain; its full sequence is Toxin ICK-20 (79 aa).

Residues 1–20 form the signal peptide; sequence MMKYFLVLCLVVLGVAAVQA. 4 cysteine pairs are disulfide-bonded: Cys-43-Cys-57, Cys-50-Cys-61, Cys-56-Cys-78, and Cys-68-Cys-74. Asn-71 carries N-linked (GlcNAc...) asparagine glycosylation.

Belongs to the neurotoxin 13 (insecticidal toxin ABC) family. ICK-21 subfamily. Expressed by the venom gland.

It is found in the secreted. Functionally, ion channel inhibitor. The chain is Toxin ICK-20 from Trittame loki (Brush-footed trapdoor spider).